The following is a 347-amino-acid chain: N-acetyl-gamma-glutamyl-phosphate reductase (347 aa).

Residue cysteine 150 is part of the active site.

The protein belongs to the NAGSA dehydrogenase family. Type 1 subfamily.

It is found in the cytoplasm. It catalyses the reaction N-acetyl-L-glutamate 5-semialdehyde + phosphate + NADP(+) = N-acetyl-L-glutamyl 5-phosphate + NADPH + H(+). It functions in the pathway amino-acid biosynthesis; L-arginine biosynthesis; N(2)-acetyl-L-ornithine from L-glutamate: step 3/4. In terms of biological role, catalyzes the NADPH-dependent reduction of N-acetyl-5-glutamyl phosphate to yield N-acetyl-L-glutamate 5-semialdehyde. This is N-acetyl-gamma-glutamyl-phosphate reductase from Leifsonia xyli subsp. xyli (strain CTCB07).